A 322-amino-acid chain; its full sequence is Ribosomal RNA small subunit methyltransferase H (322 aa).

Residues Gly47–His49, Asp67, Phe93, Asp112, and Gln119 contribute to the S-adenosyl-L-methionine site.

Belongs to the methyltransferase superfamily. RsmH family.

The protein localises to the cytoplasm. It carries out the reaction cytidine(1402) in 16S rRNA + S-adenosyl-L-methionine = N(4)-methylcytidine(1402) in 16S rRNA + S-adenosyl-L-homocysteine + H(+). Its function is as follows. Specifically methylates the N4 position of cytidine in position 1402 (C1402) of 16S rRNA. In Stenotrophomonas maltophilia (strain K279a), this protein is Ribosomal RNA small subunit methyltransferase H.